A 371-amino-acid chain; its full sequence is Dead end protein homolog 1 (371 aa).

RRM domains are found at residues 85–163 and 165–245; these read PQDI…ALDG and PGNF…KLRS.

It is found in the nucleus. The protein resides in the cytoplasm. Its function is as follows. RNA-binding factor that positively regulates gene expression by prohibiting miRNA-mediated gene suppression. Relieves miRNA repression in germline cells. Prohibits the function of several miRNAs by blocking the accessibility of target mRNAs. Sequence-specific RNA-binding factor that binds to U-rich regions (URRs) in the 3'untranslated region (3'-UTR) of several mRNAs. Does not bind to miRNAs. May play a role during early embryonic survival. This Xenopus laevis (African clawed frog) protein is Dead end protein homolog 1 (dnd1).